A 286-amino-acid polypeptide reads, in one-letter code: ATP synthase gamma chain (286 aa).

The protein belongs to the ATPase gamma chain family. F-type ATPases have 2 components, CF(1) - the catalytic core - and CF(0) - the membrane proton channel. CF(1) has five subunits: alpha(3), beta(3), gamma(1), delta(1), epsilon(1). CF(0) has three main subunits: a, b and c.

The protein localises to the cell inner membrane. Produces ATP from ADP in the presence of a proton gradient across the membrane. The gamma chain is believed to be important in regulating ATPase activity and the flow of protons through the CF(0) complex. The protein is ATP synthase gamma chain of Leptospira borgpetersenii serovar Hardjo-bovis (strain JB197).